Consider the following 322-residue polypeptide: MSKPIKIEQGIKYRDADKMALIPVRNVAEEAPKEVLRKPAWMKIKLPSDSKRIQEIKSALRKNKLHSVCEEASCPNLAECFNHGTATFMILGAICTRRCPFCDVAHGRPLPPNAEEPSHLAQTIADMKLKYVVITSVDRDDLRDGGAQHFVDCIREIREKSPEIHIETLVPDFRGRMDRALDILQGTPPNVFNHNLETAPRLYRKARPGANYQWSLDLLKNFKEIHPEVPTKSGVMMGLGETKEEIIQVLKDLRAHGVTMLTLGQYLAPSRHHLPVERYVPPAEFDELKEIALELGFTHAACGPFVRSSYHADLQAQGLEIK.

[4Fe-4S] cluster-binding residues include Cys69, Cys74, Cys80, Cys95, Cys99, Cys102, and Ser309. The region spanning 81-298 (FNHGTATFMI…KEIALELGFT (218 aa)) is the Radical SAM core domain.

Belongs to the radical SAM superfamily. Lipoyl synthase family. [4Fe-4S] cluster serves as cofactor.

It is found in the cytoplasm. The enzyme catalyses [[Fe-S] cluster scaffold protein carrying a second [4Fe-4S](2+) cluster] + N(6)-octanoyl-L-lysyl-[protein] + 2 oxidized [2Fe-2S]-[ferredoxin] + 2 S-adenosyl-L-methionine + 4 H(+) = [[Fe-S] cluster scaffold protein] + N(6)-[(R)-dihydrolipoyl]-L-lysyl-[protein] + 4 Fe(3+) + 2 hydrogen sulfide + 2 5'-deoxyadenosine + 2 L-methionine + 2 reduced [2Fe-2S]-[ferredoxin]. The protein operates within protein modification; protein lipoylation via endogenous pathway; protein N(6)-(lipoyl)lysine from octanoyl-[acyl-carrier-protein]: step 2/2. Its function is as follows. Catalyzes the radical-mediated insertion of two sulfur atoms into the C-6 and C-8 positions of the octanoyl moiety bound to the lipoyl domains of lipoate-dependent enzymes, thereby converting the octanoylated domains into lipoylated derivatives. The polypeptide is Lipoyl synthase (Photobacterium profundum (strain SS9)).